Reading from the N-terminus, the 259-residue chain is Small ribosomal subunit protein mS23 (259 aa).

The segment covering 230–244 (RAASFTGSALPSSEE) has biased composition (polar residues). Residues 230–259 (RAASFTGSALPSSEESAPVDEETEKVPQQV) form a disordered region.

Belongs to the mitochondrion-specific ribosomal protein mS23 family. As to quaternary structure, component of the mitochondrial small ribosomal subunit.

It is found in the mitochondrion. This Aspergillus terreus (strain NIH 2624 / FGSC A1156) protein is Small ribosomal subunit protein mS23 (rsm25).